The following is a 123-amino-acid chain: Large ribosomal subunit protein bL12 (123 aa).

It belongs to the bacterial ribosomal protein bL12 family. As to quaternary structure, homodimer. Part of the ribosomal stalk of the 50S ribosomal subunit. Forms a multimeric L10(L12)X complex, where L10 forms an elongated spine to which 2 to 4 L12 dimers bind in a sequential fashion. Binds GTP-bound translation factors.

Forms part of the ribosomal stalk which helps the ribosome interact with GTP-bound translation factors. Is thus essential for accurate translation. This Parvibaculum lavamentivorans (strain DS-1 / DSM 13023 / NCIMB 13966) protein is Large ribosomal subunit protein bL12.